We begin with the raw amino-acid sequence, 322 residues long: Protease HtpX homolog (322 aa).

A run of 2 helical transmembrane segments spans residues 19–39 (ILLILFPCLVAVLTYLFCYLL) and 61–81 (FINLIPYIIGGVLVWFIIAYF). His165 provides a ligand contact to Zn(2+). Glu166 is a catalytic residue. Residue His169 participates in Zn(2+) binding. Helical transmembrane passes span 175–195 (VRLLIISIVFVGIFSMLAQIA) and 216–236 (ILILVLAMIVAAIGYFFATLM). Glu245 is a binding site for Zn(2+).

It belongs to the peptidase M48B family. Requires Zn(2+) as cofactor.

The protein localises to the cell inner membrane. This Bacteroides fragilis (strain YCH46) protein is Protease HtpX homolog.